Consider the following 314-residue polypeptide: DNA-directed RNA polymerase subunit alpha (314 aa).

Positions 1–228 (MIEIEKPRIE…EHLNIFVGLT (228 aa)) are alpha N-terminal domain (alpha-NTD). The segment at 245 to 314 (KEKVLEMSIE…DLGLGLRKED (70 aa)) is alpha C-terminal domain (alpha-CTD).

The protein belongs to the RNA polymerase alpha chain family. As to quaternary structure, homodimer. The RNAP catalytic core consists of 2 alpha, 1 beta, 1 beta' and 1 omega subunit. When a sigma factor is associated with the core the holoenzyme is formed, which can initiate transcription.

The enzyme catalyses RNA(n) + a ribonucleoside 5'-triphosphate = RNA(n+1) + diphosphate. Functionally, DNA-dependent RNA polymerase catalyzes the transcription of DNA into RNA using the four ribonucleoside triphosphates as substrates. The sequence is that of DNA-directed RNA polymerase subunit alpha from Staphylococcus aureus (strain bovine RF122 / ET3-1).